The primary structure comprises 872 residues: Alanine--tRNA ligase (872 aa).

Residues His567, His571, Cys669, and His673 each contribute to the Zn(2+) site.

Belongs to the class-II aminoacyl-tRNA synthetase family. Requires Zn(2+) as cofactor.

It is found in the cytoplasm. It catalyses the reaction tRNA(Ala) + L-alanine + ATP = L-alanyl-tRNA(Ala) + AMP + diphosphate. In terms of biological role, catalyzes the attachment of alanine to tRNA(Ala) in a two-step reaction: alanine is first activated by ATP to form Ala-AMP and then transferred to the acceptor end of tRNA(Ala). Also edits incorrectly charged Ser-tRNA(Ala) and Gly-tRNA(Ala) via its editing domain. The sequence is that of Alanine--tRNA ligase from Streptococcus pyogenes serotype M2 (strain MGAS10270).